Consider the following 193-residue polypeptide: Rho-related protein racF1 (193 aa).

10–17 contacts GTP; that stretch reads GDGAVGKT. Residues 32–40 carry the Effector region motif; the sequence is YIPTVFDNY. GTP contacts are provided by residues 57 to 61 and 115 to 118; these read DTAGQ and TKQD. Cys-190 carries the cysteine methyl ester modification. Cys-190 carries S-geranylgeranyl cysteine lipidation. The propeptide at 191-193 is removed in mature form; it reads TIM.

The protein belongs to the small GTPase superfamily. Rho family. As to quaternary structure, interacts with pakB.

Its subcellular location is the membrane. Functionally, might act in concert and/or share functions with other members of the RHO family in the regulation of a subset of cytoskeletal rearrangements that are required for these processes. The protein is Rho-related protein racF1 (racF1) of Dictyostelium discoideum (Social amoeba).